A 348-amino-acid polypeptide reads, in one-letter code: Ileal sodium/bile acid cotransporter (348 aa).

Residues 1–28 are Extracellular-facing; the sequence is MDNSSVCPPNATVCEGDSCVVPESNFNA. Residues Asn-3 and Asn-10 are each glycosylated (N-linked (GlcNAc...) asparagine). The chain crosses the membrane as a helical span at residues 29-49; that stretch reads ILNTVMSTVLTILLAMVMFSM. Residues 50–87 lie on the Cytoplasmic side of the membrane; that stretch reads GCNVEVHKFLGHIKRPWGIFVGFLCQFGIMPLTGFILS. The chain crosses the membrane as a helical span at residues 88–108; it reads VASGILPVQAVVVLIMGCCPG. Residues 109 to 126 are Extracellular-facing; the sequence is GTGSNILAYWIDGDMDLS. A helical transmembrane segment spans residues 127–147; that stretch reads VSMTTCSTLLALGMMPLCLFV. Residues 148–157 lie on the Cytoplasmic side of the membrane; it reads YTKMWVDSGT. Residues 158 to 178 traverse the membrane as a helical segment; sequence IVIPYDSIGISLVALVIPVSF. The Extracellular portion of the chain corresponds to 179 to 195; that stretch reads GMFVNHKWPQKAKIILK. A helical membrane pass occupies residues 196–216; it reads IGSITGVILIVLIAVIGGILY. At 217–224 the chain is on the cytoplasmic side; that stretch reads QSAWIIEP. Residues 225–245 form a helical membrane-spanning segment; it reads KLWIIGTIFPIAGYSLGFFLA. Residues 246–284 are Extracellular-facing; the sequence is RLAGQPWYRCRTVALETGMQNTQLCSTIVQLSFSPEDLN. A helical membrane pass occupies residues 285–305; sequence LVFTFPLIYTVFQLVFAAVIL. Residues 306 to 348 are Cytoplasmic-facing; it reads GIYVTYRKCYGKNDAEFLEKTDNEMDSRPSFDETNKGFQPDEK. A disordered region spans residues 328 to 348; the sequence is NEMDSRPSFDETNKGFQPDEK. Ser-335 carries the phosphoserine modification.

The protein belongs to the bile acid:sodium symporter (BASS) (TC 2.A.28) family. As to quaternary structure, monomer and homodimer. Expressed in ileum.

It is found in the membrane. It catalyses the reaction taurocholate(out) + 2 Na(+)(out) = taurocholate(in) + 2 Na(+)(in). It carries out the reaction cholate(out) + 2 Na(+)(out) = cholate(in) + 2 Na(+)(in). The enzyme catalyses taurochenodeoxycholate(out) + 2 Na(+)(out) = taurochenodeoxycholate(in) + 2 Na(+)(in). The catalysed reaction is tauroursodeoxycholate(out) + 2 Na(+)(out) = tauroursodeoxycholate(in) + 2 Na(+)(in). It catalyses the reaction glycocholate(out) + 2 Na(+)(out) = glycocholate(in) + 2 Na(+)(in). It carries out the reaction tauronorcholate(out) + 2 Na(+)(out) = tauronorcholate(in) + 2 Na(+)(in). The enzyme catalyses tauroallocholate(out) + 2 Na(+)(out) = tauroallocholate(in) + 2 Na(+)(in). The catalysed reaction is taurodeoxycholate(out) + 2 Na(+)(out) = taurodeoxycholate(in) + 2 Na(+)(in). It catalyses the reaction tauro-beta-muricholate(out) + 2 Na(+)(out) = tauro-beta-muricholate(in) + 2 Na(+)(in). Its function is as follows. Plays a critical role in the sodium-dependent reabsorption of bile acids from the lumen of the small intestine. Transports various bile acids, unconjugated or conjugated, such as cholate and taurocholate. Also responsible for bile acid transport in the renal proximal tubules, a salvage mechanism that helps conserve bile acids. Works collaboratively with the Na(+)-taurocholate cotransporting polypeptide (NTCP), the organic solute transporter (OST), and the bile salt export pump (BSEP), to ensure efficacious biological recycling of bile acids during enterohepatic circulation. This is Ileal sodium/bile acid cotransporter (Slc10a2) from Mus musculus (Mouse).